The primary structure comprises 505 residues: Betaine aldehyde dehydrogenase (505 aa).

239 to 244 (GSTATG) contacts NAD(+). Glutamate 261 functions as the Proton acceptor in the catalytic mechanism. The Nucleophile role is filled by cysteine 296. Residues 503–505 (SKL) carry the Microbody targeting signal motif.

The protein belongs to the aldehyde dehydrogenase family. In terms of assembly, homodimer.

The protein localises to the peroxisome. The enzyme catalyses betaine aldehyde + NAD(+) + H2O = glycine betaine + NADH + 2 H(+). The protein operates within amine and polyamine biosynthesis; betaine biosynthesis via choline pathway; betaine from betaine aldehyde: step 1/1. This Hordeum vulgare (Barley) protein is Betaine aldehyde dehydrogenase.